The sequence spans 231 residues: Large ribosomal subunit protein uL1 (231 aa).

This sequence belongs to the universal ribosomal protein uL1 family. As to quaternary structure, part of the 50S ribosomal subunit.

Binds directly to 23S rRNA. The L1 stalk is quite mobile in the ribosome, and is involved in E site tRNA release. Its function is as follows. Protein L1 is also a translational repressor protein, it controls the translation of the L11 operon by binding to its mRNA. The sequence is that of Large ribosomal subunit protein uL1 from Hydrogenovibrio crunogenus (strain DSM 25203 / XCL-2) (Thiomicrospira crunogena).